Consider the following 406-residue polypeptide: Coenzyme A biosynthesis bifunctional protein CoaBC (406 aa).

The phosphopantothenoylcysteine decarboxylase stretch occupies residues 1-191; the sequence is MLNNRNVLLC…ETSAPLEGKH (191 aa). Catalysis depends on cysteine 157, which acts as the Proton donor. Residues 192–406 form a phosphopantothenate--cysteine ligase region; the sequence is VVITAGPTRE…ALSKQTGERS (215 aa). CTP contacts are provided by aspartate 281, lysine 291, phenylalanine 325, lysine 339, and lysine 343.

In the N-terminal section; belongs to the HFCD (homo-oligomeric flavin containing Cys decarboxylase) superfamily. The protein in the C-terminal section; belongs to the PPC synthetase family. Requires Mg(2+) as cofactor. The cofactor is FMN.

It catalyses the reaction N-[(R)-4-phosphopantothenoyl]-L-cysteine + H(+) = (R)-4'-phosphopantetheine + CO2. The enzyme catalyses (R)-4'-phosphopantothenate + L-cysteine + CTP = N-[(R)-4-phosphopantothenoyl]-L-cysteine + CMP + diphosphate + H(+). The protein operates within cofactor biosynthesis; coenzyme A biosynthesis; CoA from (R)-pantothenate: step 2/5. Its pathway is cofactor biosynthesis; coenzyme A biosynthesis; CoA from (R)-pantothenate: step 3/5. Catalyzes two sequential steps in the biosynthesis of coenzyme A. In the first step cysteine is conjugated to 4'-phosphopantothenate to form 4-phosphopantothenoylcysteine. In the second step the latter compound is decarboxylated to form 4'-phosphopantotheine. In Bacillus subtilis (strain 168), this protein is Coenzyme A biosynthesis bifunctional protein CoaBC.